The chain runs to 978 residues: Macrophage colony-stimulating factor 1 receptor (978 aa).

The signal sequence occupies residues 1-19 (MELGPPLVLLLATVWHGQG). Over 20 to 515 (APVIEPSGPE…QLPDESLFTP (496 aa)) the chain is Extracellular. Ig-like C2-type domains are found at residues 24 to 104 (EPSG…VKDP), 107 to 197 (SWNL…KVNR), 204 to 298 (QIKL…VVES), 299 to 397 (AYLN…LTLR), and 398 to 503 (YPPE…SLGQ). Cystine bridges form between C42-C84, C127-C177, and C224-C278. 2 N-linked (GlcNAc...) asparagine glycosylation sites follow: N45 and N73. 7 N-linked (GlcNAc...) asparagine glycosylation sites follow: N302, N335, N389, N410, N449, N478, and N491. The cysteines at positions 417 and 483 are disulfide-linked. The chain crosses the membrane as a helical span at residues 516-536 (VVVACMSVMSLLVLLLLLLLY). Over 537-978 (KYKQKPKYQV…LQPNNYQFAC (442 aa)) the chain is Cytoplasmic. The segment at 540 to 572 (QKPKYQVRWKIIERYEGNSYTFIDPTQLPYNEK) is regulatory juxtamembrane domain. Phosphotyrosine; by autocatalysis occurs at positions 544 and 559. One can recognise a Protein kinase domain in the interval 580-914 (LQFGKTLGAG…CFLLQEQARL (335 aa)). ATP contacts are provided by residues 586-594 (LGAGAFGKV) and K614. 2 positions are modified to phosphotyrosine; by autocatalysis: Y697 and Y706. Residue S711 is modified to Phosphoserine. At Y721 the chain carries Phosphotyrosine; by autocatalysis. The Proton acceptor role is filled by D776. An activation loop region spans residues 794–816 (DFGLARDIMNDSNYVVKGNARLP). Y807 and Y921 each carry phosphotyrosine; by autocatalysis. Residues 921 to 957 (YANLPSSGGSSGSDSGGGSSGGSSSEPEEESSSEHLA) are disordered. A compositionally biased stretch (gly residues) spans 929 to 941 (GSSGSDSGGGSSG). Y974 carries the phosphotyrosine; by autocatalysis modification.

Belongs to the protein kinase superfamily. Tyr protein kinase family. CSF-1/PDGF receptor subfamily. As to quaternary structure, monomer. Homodimer. Interacts with CSF1 and IL34. Interaction with dimeric CSF1 or IL34 leads to receptor homodimerization. Interacts with INPPL1/SHIP2 and THOC5. Interacts (tyrosine phosphorylated) with PLCG2 (via SH2 domain). Interacts (tyrosine phosphorylated) with PIK3R1 (via SH2 domain). Interacts (tyrosine phosphorylated) with FYN, YES1 and SRC (via SH2 domain). Interacts (tyrosine phosphorylated) with CBL, GRB2 and SLA2. In terms of processing, autophosphorylated in response to CSF1 or IL34 binding. Phosphorylation at Tyr-559 is important for normal down-regulation of signaling by ubiquitination, internalization and degradation. Phosphorylation at Tyr-559 and Tyr-807 is important for interaction with SRC family members, including FYN, YES1 and SRC, and for subsequent activation of these protein kinases. Phosphorylation at Tyr-697 and Tyr-921 is important for interaction with GRB2. Phosphorylation at Tyr-721 is important for interaction with PIK3R1. Phosphorylation at Tyr-721 and Tyr-807 is important for interaction with PLCG2. Phosphorylation at Tyr-974 is important for interaction with CBL. Dephosphorylation by PTPN2 negatively regulates downstream signaling and macrophage differentiation. Ubiquitinated. Becomes rapidly polyubiquitinated after autophosphorylation, leading to its degradation.

The protein localises to the cell membrane. The enzyme catalyses L-tyrosyl-[protein] + ATP = O-phospho-L-tyrosyl-[protein] + ADP + H(+). Its activity is regulated as follows. Present in an inactive conformation in the absence of bound ligand. CSF1 or IL34 binding leads to dimerization and activation by autophosphorylation on tyrosine residues. Its function is as follows. Tyrosine-protein kinase that acts as a cell-surface receptor for CSF1 and IL34 and plays an essential role in the regulation of survival, proliferation and differentiation of hematopoietic precursor cells, especially mononuclear phagocytes, such as macrophages and monocytes. Promotes the release of pro-inflammatory chemokines in response to IL34 and CSF1, and thereby plays an important role in innate immunity and in inflammatory processes. Plays an important role in the regulation of osteoclast proliferation and differentiation, the regulation of bone resorption, and is required for normal bone and tooth development. Required for normal male and female fertility, and for normal development of milk ducts and acinar structures in the mammary gland during pregnancy. Promotes reorganization of the actin cytoskeleton, regulates formation of membrane ruffles, cell adhesion and cell migration, and promotes cancer cell invasion. Activates several signaling pathways in response to ligand binding, including the ERK1/2 and the JNK pathway. Phosphorylates PIK3R1, PLCG2, GRB2, SLA2 and CBL. Activation of PLCG2 leads to the production of the cellular signaling molecules diacylglycerol and inositol 1,4,5-trisphosphate, that then lead to the activation of protein kinase C family members, especially PRKCD. Phosphorylation of PIK3R1, the regulatory subunit of phosphatidylinositol 3-kinase, leads to activation of the AKT1 signaling pathway. Activated CSF1R also mediates activation of the MAP kinases MAPK1/ERK2 and/or MAPK3/ERK1, and of the SRC family kinases SRC, FYN and YES1. Activated CSF1R transmits signals both via proteins that directly interact with phosphorylated tyrosine residues in its intracellular domain, or via adapter proteins, such as GRB2. Promotes activation of STAT family members STAT3, STAT5A and/or STAT5B. Promotes tyrosine phosphorylation of SHC1 and INPP5D/SHIP-1. Receptor signaling is down-regulated by protein phosphatases, such as INPP5D/SHIP-1, that dephosphorylate the receptor and its downstream effectors, and by rapid internalization of the activated receptor. In the central nervous system, may play a role in the development of microglia macrophages. This Rattus norvegicus (Rat) protein is Macrophage colony-stimulating factor 1 receptor (Csf1r).